The following is a 297-amino-acid chain: 4-hydroxy-tetrahydrodipicolinate synthase (297 aa).

Position 45 (T45) interacts with pyruvate. The active-site Proton donor/acceptor is Y133. Catalysis depends on K161, which acts as the Schiff-base intermediate with substrate. I205 lines the pyruvate pocket.

Belongs to the DapA family. Homotetramer; dimer of dimers.

It is found in the cytoplasm. The enzyme catalyses L-aspartate 4-semialdehyde + pyruvate = (2S,4S)-4-hydroxy-2,3,4,5-tetrahydrodipicolinate + H2O + H(+). It participates in amino-acid biosynthesis; L-lysine biosynthesis via DAP pathway; (S)-tetrahydrodipicolinate from L-aspartate: step 3/4. Its function is as follows. Catalyzes the condensation of (S)-aspartate-beta-semialdehyde [(S)-ASA] and pyruvate to 4-hydroxy-tetrahydrodipicolinate (HTPA). The chain is 4-hydroxy-tetrahydrodipicolinate synthase from Dichelobacter nodosus (strain VCS1703A).